The sequence spans 243 residues: Large ribosomal subunit protein uL30 (243 aa).

The disordered stretch occupies residues 1–31 (MADKILTPESQLKKSKAQQKSAEQVAAERAA). Over residues 18–28 (QQKSAEQVAAE) the composition is skewed to low complexity.

The protein belongs to the universal ribosomal protein uL30 family.

In Eremothecium gossypii (strain ATCC 10895 / CBS 109.51 / FGSC 9923 / NRRL Y-1056) (Yeast), this protein is Large ribosomal subunit protein uL30 (RPL7).